The chain runs to 76 residues: MLSLKKSMLLLFFLGMVSFSLANKRSDGKRADEEGEDKRADEEGEDKRADEEGEDKRKRFLPFLIPALTSLISSLG.

An N-terminal signal peptide occupies residues M1 to A22. The propeptide occupies N23 to D55. A disordered region spans residues K24 to E54. L75 is modified (leucine amide).

Expressed by the skin glands.

The protein localises to the secreted. Antimicrobial peptide with activity against the Gram-positive bacterium S.aureus NCTC 10788 (MIC=50 um) and the yeast C.albicans NCPF 1467 (MIC=150 uM). Ineffective against the Gram-negative bacterium E.coli NCTC 10418. Induces a dose-dependent contraction of rat urinary bladder smooth muscle (EC50=2.9 nM) and a dose-dependent relaxation of rat tail artery smooth muscle (EC50=37.7 nM). This Kassina senegalensis (Senegal running frog) protein is Senegalin.